Here is a 406-residue protein sequence, read N- to C-terminus: Peptidase T (406 aa).

His82 lines the Zn(2+) pocket. Asp84 is a catalytic residue. Residue Asp142 participates in Zn(2+) binding. Glu176 (proton acceptor) is an active-site residue. Positions 177, 199, and 381 each coordinate Zn(2+).

Belongs to the peptidase M20B family. It depends on Zn(2+) as a cofactor.

The protein localises to the cytoplasm. It catalyses the reaction Release of the N-terminal residue from a tripeptide.. Cleaves the N-terminal amino acid of tripeptides. In Streptococcus agalactiae serotype III (strain NEM316), this protein is Peptidase T.